Here is a 109-residue protein sequence, read N- to C-terminus: Ubiquitin-related modifier 1 homolog (109 aa).

Position 109 is a 1-thioglycine (glycine 109). A Glycyl lysine isopeptide (Gly-Lys) (interchain with K-? in acceptor proteins) cross-link involves residue glycine 109.

The protein belongs to the URM1 family. C-terminal thiocarboxylation occurs in 2 steps, it is first acyl-adenylated (-COAMP) via the hesA/moeB/thiF part of the MOCS3 homolog, then thiocarboxylated (-COSH) via the rhodanese domain of the MOCS3 homolog.

Its subcellular location is the cytoplasm. It functions in the pathway tRNA modification; 5-methoxycarbonylmethyl-2-thiouridine-tRNA biosynthesis. Acts as a sulfur carrier required for 2-thiolation of mcm(5)S(2)U at tRNA wobble positions of cytosolic tRNA(Lys), tRNA(Glu) and tRNA(Gln). Serves as sulfur donor in tRNA 2-thiolation reaction by being thiocarboxylated (-COSH) at its C-terminus by MOCS3. The sulfur is then transferred to tRNA to form 2-thiolation of mcm(5)S(2)U. Also acts as a ubiquitin-like protein (UBL) that is covalently conjugated via an isopeptide bond to lysine residues of target proteins. The thiocarboxylated form serves as substrate for conjugation and oxidative stress specifically induces the formation of UBL-protein conjugates. In Bombyx mori (Silk moth), this protein is Ubiquitin-related modifier 1 homolog.